A 181-amino-acid polypeptide reads, in one-letter code: MMKLKEFFINIISIFRSVYMVGMQAFSKRETYMYPDVACKLSSRYRGRIVLTRDSAGHERCVACNLCAVSCPVGCISLKKSENSEGRWYPEFFRINFSRCIFCGMCEEACPTAAIQLISDFEMSDYKRSDLVYEKSDLLISGPGKYKNYDFYQISGVKYSNKYKKESSFEEKPISVKTILP.

2 4Fe-4S ferredoxin-type domains span residues 52–81 (TRDSAGHERCVACNLCAVSCPVGCISLKKS) and 91–120 (EFFRINFSRCIFCGMCEEACPTAAIQLISD). [4Fe-4S] cluster is bound by residues C61, C64, C67, C71, C100, C103, C106, and C110.

Belongs to the complex I 23 kDa subunit family. As to quaternary structure, NDH-1 is composed of 13 different subunits. Subunits NuoA, H, J, K, L, M, N constitute the membrane sector of the complex. It depends on [4Fe-4S] cluster as a cofactor.

It localises to the cell inner membrane. The catalysed reaction is a quinone + NADH + 5 H(+)(in) = a quinol + NAD(+) + 4 H(+)(out). In terms of biological role, NDH-1 shuttles electrons from NADH, via FMN and iron-sulfur (Fe-S) centers, to quinones in the respiratory chain. The immediate electron acceptor for the enzyme in this species is believed to be ubiquinone. Couples the redox reaction to proton translocation (for every two electrons transferred, four hydrogen ions are translocated across the cytoplasmic membrane), and thus conserves the redox energy in a proton gradient. This is NADH-quinone oxidoreductase subunit I from Blochmanniella floridana.